The chain runs to 238 residues: Type III pantothenate kinase (238 aa).

Residue D7–K14 coordinates ATP. Substrate is bound by residues Y88 and G95–R98. The Proton acceptor role is filled by D97. D117 is a K(+) binding site. Residue T120 participates in ATP binding. T172 contributes to the substrate binding site.

The protein belongs to the type III pantothenate kinase family. Homodimer. NH4(+) serves as cofactor. Requires K(+) as cofactor.

It localises to the cytoplasm. It catalyses the reaction (R)-pantothenate + ATP = (R)-4'-phosphopantothenate + ADP + H(+). Its pathway is cofactor biosynthesis; coenzyme A biosynthesis; CoA from (R)-pantothenate: step 1/5. Catalyzes the phosphorylation of pantothenate (Pan), the first step in CoA biosynthesis. This chain is Type III pantothenate kinase, found in Hahella chejuensis (strain KCTC 2396).